The chain runs to 341 residues: ATPase GET3 (341 aa).

34–41 (KGGVGKTT) contacts ATP. Asp63 is a catalytic residue. The ATP site is built by Glu245 and Asn272. Zn(2+)-binding residues include Cys283 and Cys286.

The protein belongs to the arsA ATPase family. Homodimer.

It localises to the cytoplasm. The protein resides in the endoplasmic reticulum. Functionally, ATPase required for the post-translational delivery of tail-anchored (TA) proteins to the endoplasmic reticulum. Recognizes and selectively binds the transmembrane domain of TA proteins in the cytosol. This complex then targets to the endoplasmic reticulum by membrane-bound receptors, where the tail-anchored protein is released for insertion. This process is regulated by ATP binding and hydrolysis. ATP binding drives the homodimer towards the closed dimer state, facilitating recognition of newly synthesized TA membrane proteins. ATP hydrolysis is required for insertion. Subsequently, the homodimer reverts towards the open dimer state, lowering its affinity for the membrane-bound receptor, and returning it to the cytosol to initiate a new round of targeting. This chain is ATPase GET3, found in Paracoccidioides lutzii (strain ATCC MYA-826 / Pb01) (Paracoccidioides brasiliensis).